An 811-amino-acid polypeptide reads, in one-letter code: Probable inorganic carbon transporter subunit DabA (811 aa).

Cysteine 336, aspartate 338, histidine 498, and cysteine 513 together coordinate Zn(2+).

It belongs to the inorganic carbon transporter (TC 9.A.2) DabA family. In terms of assembly, forms a complex with DabB. The cofactor is Zn(2+).

It localises to the cell inner membrane. Its function is as follows. Part of an energy-coupled inorganic carbon pump. The sequence is that of Probable inorganic carbon transporter subunit DabA from Azorhizobium caulinodans (strain ATCC 43989 / DSM 5975 / JCM 20966 / LMG 6465 / NBRC 14845 / NCIMB 13405 / ORS 571).